The following is a 200-amino-acid chain: ATP-dependent Clp protease proteolytic subunit (200 aa).

The active-site Nucleophile is the serine 96. Histidine 121 is an active-site residue.

The protein belongs to the peptidase S14 family. In terms of assembly, fourteen ClpP subunits assemble into 2 heptameric rings which stack back to back to give a disk-like structure with a central cavity, resembling the structure of eukaryotic proteasomes.

The protein localises to the cytoplasm. It carries out the reaction Hydrolysis of proteins to small peptides in the presence of ATP and magnesium. alpha-casein is the usual test substrate. In the absence of ATP, only oligopeptides shorter than five residues are hydrolyzed (such as succinyl-Leu-Tyr-|-NHMec, and Leu-Tyr-Leu-|-Tyr-Trp, in which cleavage of the -Tyr-|-Leu- and -Tyr-|-Trp bonds also occurs).. Cleaves peptides in various proteins in a process that requires ATP hydrolysis. Has a chymotrypsin-like activity. Plays a major role in the degradation of misfolded proteins. This chain is ATP-dependent Clp protease proteolytic subunit, found in Leuconostoc citreum (strain KM20).